The primary structure comprises 401 residues: Phosphoglycerate kinase (401 aa).

Residues 20–22 (DFN), Arg35, 58–61 (HLGR), Arg117, and Arg154 contribute to the substrate site. ATP is bound by residues Lys204, Gly298, Glu329, and 358 to 361 (GGDS).

The protein belongs to the phosphoglycerate kinase family. Monomer.

The protein localises to the cytoplasm. The catalysed reaction is (2R)-3-phosphoglycerate + ATP = (2R)-3-phospho-glyceroyl phosphate + ADP. It functions in the pathway carbohydrate degradation; glycolysis; pyruvate from D-glyceraldehyde 3-phosphate: step 2/5. This Bifidobacterium adolescentis (strain ATCC 15703 / DSM 20083 / NCTC 11814 / E194a) protein is Phosphoglycerate kinase.